The primary structure comprises 970 residues: Protein tweety (970 aa).

Over 1-47 (MGDYHEFTDQYKVPVIAKLLHALPHYNITFHKINSTFRPNDEIYLES) the chain is Extracellular. Asn-27 and Asn-34 each carry an N-linked (GlcNAc...) asparagine glycan. A helical membrane pass occupies residues 48-68 (LGILGSVPAALLIVSLLGLLF). The Cytoplasmic portion of the chain corresponds to 69–89 (YLMTRCCDRKPRPAHSITSLK). The helical transmembrane segment at 90–110 (VALSIVTVMCCAAIGLGLYGN) threads the bilayer. The Extracellular portion of the chain corresponds to 111 to 219 (DDLHNGLLEV…GDQWELIRWP (109 aa)). 3 N-linked (GlcNAc...) asparagine glycosylation sites follow: Asn-136, Asn-166, and Asn-183. A helical membrane pass occupies residues 220-240 (GTVATLALLLVLCAVLLVGVA). Residues 241–246 (RHSRCA) are Cytoplasmic-facing. Residues 247-267 (LILFSVCGLLAVTGSWLMSGL) form a helical membrane-spanning segment. At 268-395 (YLSSSVAVGD…RGLCEGGLLG (128 aa)) the chain is on the extracellular side. The N-linked (GlcNAc...) asparagine glycan is linked to Asn-359. The helical transmembrane segment at 396–416 (LVLMLIASFIAAILLTIMVWV) threads the bilayer. At 417-970 (DSHTWIYIRK…DESNYAVTEL (554 aa)) the chain is on the cytoplasmic side. A compositionally biased stretch (low complexity) spans 532–571 (NAAANMPPTTQAAQQQQQQQAQQQQQQAQQQLGGPQPIYC). Disordered stretches follow at residues 532–587 (NAAA…QHPH), 677–763 (RQNS…NESD), and 849–970 (MKAI…VTEL). A compositionally biased stretch (basic residues) spans 572-587 (HHPHQHPHPHPHQHPH). 3 stretches are compositionally biased toward low complexity: residues 689 to 700 (HQHPPSLHQQQQ), 707 to 737 (QQQQ…QQHH), and 745 to 759 (QHQQ…QQQP). The segment covering 852-868 (IPPPRIGTPTSPPPPVA) has biased composition (pro residues). Gly residues-rich tracts occupy residues 883–894 (QNGGAVVGGGGA) and 931–945 (NGGG…GGGA). Positions 961–970 (DESNYAVTEL) are enriched in polar residues.

Belongs to the tweety family.

The protein resides in the cell membrane. Non-essential protein that probably acts as a chloride channel. The sequence is that of Protein tweety (tty) from Drosophila melanogaster (Fruit fly).